Consider the following 452-residue polypeptide: MKDTIVAQATPIGRGGVGILRISGPLAQEVAKEVLGKELKPRLANYLPFKDQDGTVLDQGIALFFKAPNSFTGEDVLELQGHGGQVILDILLKRILTIKGIRIARAGEFSEQAFLNDKLDLAQAEAIADLIDATSEQAARSALKSLQGEFSNKINQLVDSVIYLRTYVEAAIDFPDEEIDFLADGKIEGHLNDTIRQLNGVRKEAKQGAILREGMKVVIAGRPNAGKSSLLNALAGREAAIVTNIAGTTRDVLREHIHIDGMPLHIIDTAGLREASDEVEKIGIQRAWDEIEQADHVLLMIDSTEQTAEAFKTEWADFLAKLPQSIPVTVIRNKVDLSGEAEGLQELDGFTLIRLSAQTKVGVDLLREHLKKSMGYQSSTEGGFLARRRHLQALETAAEHLERGHIQLTQFFAGELLAEELRMVQNALSEITGQFTSDDLLGNIFSSFCIGK.

Arg21, Glu78, and Lys118 together coordinate (6S)-5-formyl-5,6,7,8-tetrahydrofolate. One can recognise a TrmE-type G domain in the interval 214 to 375 (GMKVVIAGRP…LREHLKKSMG (162 aa)). A K(+)-binding site is contributed by Asn224. GTP-binding positions include 224–229 (NAGKSS), 243–249 (TNIAGTT), and 268–271 (DTAG). Position 228 (Ser228) interacts with Mg(2+). Thr243, Ile245, and Thr248 together coordinate K(+). Mg(2+) is bound at residue Thr249. Position 452 (Lys452) interacts with (6S)-5-formyl-5,6,7,8-tetrahydrofolate.

The protein belongs to the TRAFAC class TrmE-Era-EngA-EngB-Septin-like GTPase superfamily. TrmE GTPase family. As to quaternary structure, homodimer. Heterotetramer of two MnmE and two MnmG subunits. K(+) is required as a cofactor.

It localises to the cytoplasm. Its function is as follows. Exhibits a very high intrinsic GTPase hydrolysis rate. Involved in the addition of a carboxymethylaminomethyl (cmnm) group at the wobble position (U34) of certain tRNAs, forming tRNA-cmnm(5)s(2)U34. The sequence is that of tRNA modification GTPase MnmE from Actinobacillus pleuropneumoniae serotype 5b (strain L20).